The sequence spans 359 residues: Fructose-1,6-bisphosphatase class 1 (359 aa).

Residues E95, D117, L119, and D120 each contribute to the Mg(2+) site. Substrate-binding positions include 120-123 and N212; that span reads DGSS. E284 provides a ligand contact to Mg(2+).

Belongs to the FBPase class 1 family. Homotetramer. It depends on Mg(2+) as a cofactor.

The protein resides in the cytoplasm. The enzyme catalyses beta-D-fructose 1,6-bisphosphate + H2O = beta-D-fructose 6-phosphate + phosphate. It functions in the pathway carbohydrate biosynthesis; gluconeogenesis. The polypeptide is Fructose-1,6-bisphosphatase class 1 (Hydrogenophilus thermoluteolus (Pseudomonas hydrogenothermophila)).